A 156-amino-acid polypeptide reads, in one-letter code: Ribonuclease H (156 aa).

In terms of domain architecture, RNase H type-1 spans 3–144 (ELKLIHIFTD…CDVLARTAAE (142 aa)). Positions 12, 50, 72, and 136 each coordinate Mg(2+).

This sequence belongs to the RNase H family. Monomer. The cofactor is Mg(2+).

Its subcellular location is the cytoplasm. It catalyses the reaction Endonucleolytic cleavage to 5'-phosphomonoester.. In terms of biological role, endonuclease that specifically degrades the RNA of RNA-DNA hybrids. The polypeptide is Ribonuclease H (Shewanella baltica (strain OS223)).